The sequence spans 783 residues: Tripartite motif-containing protein 67 (783 aa).

The RING-type; degenerate zinc-finger motif lies at C7–E42. The B box-type 1; degenerate zinc finger occupies A206–P253. Positions K247–S295 are disordered. A compositionally biased stretch (pro residues) spans Q252–A261. Gly residues predominate over residues P275–G293. The segment at R298–L340 adopts a B box-type 2 zinc-finger fold. The Zn(2+) site is built by C303, H306, C326, and H332. A coiled-coil region spans residues K345 to N382. In terms of domain architecture, COS spans I448 to I506. A Fibronectin type-III domain is found at P513 to V607. A B30.2/SPRY domain is found at N589–L780.

This sequence belongs to the TRIM/RBCC family.

Its subcellular location is the cytoplasm. The protein localises to the cytoskeleton. The chain is Tripartite motif-containing protein 67 (TRIM67) from Homo sapiens (Human).